We begin with the raw amino-acid sequence, 127 residues long: Protein LLP homolog (127 aa).

Positions 1-21 (MAKSLRSKWKRKMRAEKRKKN) are enriched in basic residues. The disordered stretch occupies residues 1 to 24 (MAKSLRSKWKRKMRAEKRKKNAPK). Residues Lys-65 and Lys-72 each participate in a glycyl lysine isopeptide (Lys-Gly) (interchain with G-Cter in SUMO2) cross-link. Residues 98–120 (RQRKRLKAKRERKKGKSKVKAMK) show a composition bias toward basic residues. The segment at 98–127 (RQRKRLKAKRERKKGKSKVKAMKAAKGLTW) is disordered.

It belongs to the learning-associated protein family. As to quaternary structure, interacts with CTCF, MYO1C and with the transcriptional machinery, including RNA polymerase II and TBP.

It localises to the nucleus. Its subcellular location is the nucleolus. The protein localises to the chromosome. In terms of biological role, in hippocampal neurons, regulates dendritic and spine growth and synaptic transmission. In Bos taurus (Bovine), this protein is Protein LLP homolog (LLPH).